A 393-amino-acid polypeptide reads, in one-letter code: S-adenosylmethionine synthase 1 (393 aa).

E9 is a Mg(2+) binding site. ATP is bound at residue H15. E43 provides a ligand contact to K(+). L-methionine is bound by residues E56 and Q99. The residue at position 114 (C114) is an S-nitrosocysteine. Residues 167–169 (DGK), 235–238 (SGRF), D246, 252–253 (RK), A269, K273, and K277 each bind ATP. D246 contacts L-methionine. K277 provides a ligand contact to L-methionine.

Belongs to the AdoMet synthase family. As to quaternary structure, homotetramer. Interacts with GRF3. It depends on Mn(2+) as a cofactor. The cofactor is Mg(2+). Co(2+) serves as cofactor. K(+) is required as a cofactor. Post-translationally, S-nitrosylated in the presence of NO. The inhibition of SAM1 activity by S-nitrosylation could contribute to the cross-talk between ethylene and NO signaling. In terms of tissue distribution, highly expressed in stems and roots.

It is found in the cytoplasm. It catalyses the reaction L-methionine + ATP + H2O = S-adenosyl-L-methionine + phosphate + diphosphate. It functions in the pathway amino-acid biosynthesis; S-adenosyl-L-methionine biosynthesis; S-adenosyl-L-methionine from L-methionine: step 1/1. With respect to regulation, reversibly inhibited by NO. Inhibited by 5,5'-dithiobis-2-nitrobenzoic acid (DTNB) and N-ethylmaleimide (NEM) (in vitro). Functionally, catalyzes the formation of S-adenosylmethionine from methionine and ATP. The reaction comprises two steps that are both catalyzed by the same enzyme: formation of S-adenosylmethionine (AdoMet) and triphosphate, and subsequent hydrolysis of the triphosphate. This Arabidopsis thaliana (Mouse-ear cress) protein is S-adenosylmethionine synthase 1 (SAM1).